The chain runs to 89 residues: Small ribosomal subunit protein uS17 (89 aa).

This sequence belongs to the universal ribosomal protein uS17 family. In terms of assembly, part of the 30S ribosomal subunit.

In terms of biological role, one of the primary rRNA binding proteins, it binds specifically to the 5'-end of 16S ribosomal RNA. This Leptospira interrogans serogroup Icterohaemorrhagiae serovar Lai (strain 56601) protein is Small ribosomal subunit protein uS17.